A 211-amino-acid chain; its full sequence is MAGEHIKVIYFDGRGRAESIRMTLVAAGVDYEDERISFQDWPKIKPTIPGGRLPAVKVTDDHGHVKWMLESLAIARYMAKKHHMMGETDEEYYSVEKLIGQAEDVEHEYHKTLMKPQEEKEKITKEILNGKVPVLLNMICESLKGSTGKLAVGDKVTLADLVLIAVIDHVTDLDKGFLTGKYPEIHKHRENLLASSPRLAKYLSNRPATPF.

A2 bears the N-acetylalanine mark. The GST N-terminal domain occupies 4–86 (EHIKVIYFDG…YMAKKHHMMG (83 aa)). Residues Y10, 10-11 (YF), R16, 41-45 (WPKIK), L53, 55-56 (AV), and 70-71 (ES) contribute to the glutathione site. Residues 88 to 211 (TDEEYYSVEK…YLSNRPATPF (124 aa)) form the GST C-terminal domain.

The protein belongs to the GST superfamily. Mu family. As to quaternary structure, homodimer. In terms of tissue distribution, in the adult, expressed in excretory epithelial cells but absent from the caecal epithelium and flame cells. Also expressed in the tegument and its extensions into the parenchyma. In the schistosomulum, expressed in the tegument and associated structures. Not expressed in digestive tract, reproductive organs or muscles (at protein level).

It carries out the reaction RX + glutathione = an S-substituted glutathione + a halide anion + H(+). In terms of biological role, conjugation of reduced glutathione to a wide number of exogenous and endogenous hydrophobic electrophiles. Functionally, GST isoenzymes appear to play a central role in the parasite detoxification system. Other functions are also suspected including a role in increasing the solubility of haematin in the parasite gut. This Schistosoma mansoni (Blood fluke) protein is Glutathione S-transferase class-mu 28 kDa isozyme (GST28).